The sequence spans 305 residues: Oxygen-dependent coproporphyrinogen-III oxidase (305 aa).

Ser98 lines the substrate pocket. Positions 102 and 112 each coordinate a divalent metal cation. Residue His112 is the Proton donor of the active site. Residue 114-116 (NVR) participates in substrate binding. Residues His151 and His181 each coordinate a divalent metal cation. An important for dimerization region spans residues 246–281 (YVEFNLVYDRGTLFGLQSGGRTESILMSMPPLARWE). Position 264–266 (264–266 (GGR)) interacts with substrate.

It belongs to the aerobic coproporphyrinogen-III oxidase family. As to quaternary structure, homodimer. A divalent metal cation serves as cofactor.

Its subcellular location is the cytoplasm. It carries out the reaction coproporphyrinogen III + O2 + 2 H(+) = protoporphyrinogen IX + 2 CO2 + 2 H2O. It functions in the pathway porphyrin-containing compound metabolism; protoporphyrin-IX biosynthesis; protoporphyrinogen-IX from coproporphyrinogen-III (O2 route): step 1/1. Involved in the heme biosynthesis. Catalyzes the aerobic oxidative decarboxylation of propionate groups of rings A and B of coproporphyrinogen-III to yield the vinyl groups in protoporphyrinogen-IX. The protein is Oxygen-dependent coproporphyrinogen-III oxidase of Vibrio vulnificus (strain YJ016).